We begin with the raw amino-acid sequence, 493 residues long: Serine/threonine-protein kinase 3 (493 aa).

The Protein kinase domain occupies 26 to 277; sequence FDVLEKLGEG…ATQLLQHPFI (252 aa). ATP contacts are provided by residues 32-40 and Lys55; that span reads LGEGSYGSV. Asp145 (proton acceptor) is an active-site residue. Phosphothreonine; by autocatalysis is present on Thr179. Positions 286 to 327 form a coiled coil; the sequence is LRDLITEAMDIKAKRHEELQRELEEEDENSEEDELDSHTMVK. 2 disordered regions span residues 303-336 and 369-414; these read ELQR…AGTM and DDEE…NCNQ. Over residues 308–320 the composition is skewed to acidic residues; that stretch reads LEEEDENSEEDEL. Polar residues predominate over residues 325 to 336; the sequence is MVKTNSESAGTM. Acidic residues predominate over residues 369 to 378; that stretch reads DDEEEEEEED. Over residues 398–410 the composition is skewed to basic and acidic residues; that stretch reads YFDKQDSKNKPHD. The SARAH domain occupies 439 to 486; it reads FDFLKNLSFEELQMRLKALDPMMEREIEDLRQRYNAKRQPILDAMDAK. The stretch at 444–477 forms a coiled coil; that stretch reads NLSFEELQMRLKALDPMMEREIEDLRQRYNAKRQ.

Belongs to the protein kinase superfamily. STE Ser/Thr protein kinase family. STE20 subfamily. As to quaternary structure, homodimer; mediated via the coiled-coil region. The cofactor is Mg(2+).

It localises to the cytoplasm. Its subcellular location is the nucleus. It carries out the reaction L-seryl-[protein] + ATP = O-phospho-L-seryl-[protein] + ADP + H(+). The enzyme catalyses L-threonyl-[protein] + ATP = O-phospho-L-threonyl-[protein] + ADP + H(+). With respect to regulation, inhibited by the C-terminal non-catalytic region. Activated by caspase-cleavage. Full activation also requires homodimerization and autophosphorylation of Thr-179. Stress-activated, pro-apoptotic kinase which, following caspase-cleavage, enters the nucleus and induces chromatin condensation followed by internucleosomal DNA fragmentation. Key component of the Hippo signaling pathway which plays a pivotal role in organ size control and tumor suppression by restricting proliferation and promoting apoptosis. The core of this pathway is composed of a kinase cascade wherein stk3/mst2 and stk4/mst1, in complex with its regulatory protein sav1, phosphorylates and activates lats1/2 in complex with its regulatory protein mob1, which in turn phosphorylates and inactivates yap1 oncoprotein and wwtr1/taz. Phosphorylation of yap1 by lats2 inhibits its translocation into the nucleus to regulate cellular genes important for cell proliferation, cell death, and cell migration. The protein is Serine/threonine-protein kinase 3 (stk3) of Xenopus laevis (African clawed frog).